A 147-amino-acid polypeptide reads, in one-letter code: Protein phosphatase 1 regulatory subunit 14A (147 aa).

Over residues 1 to 11 (MAAQRLGKRVL) the composition is skewed to basic residues. The disordered stretch occupies residues 1-37 (MAAQRLGKRVLSKLQSPSRARGPGGSPSGLQKRHARV). A Phosphoserine modification is found at serine 26. The inhibitory stretch occupies residues 35–120 (ARVTVKYDRR…LLAKLRGLHK (86 aa)). The residue at position 38 (threonine 38) is a Phosphothreonine. The disordered stretch occupies residues 118–147 (LHKQPGFPQPSPSDDPSLSPRQDPAHTAPP). Residues serine 128, serine 134, and serine 136 each carry the phosphoserine modification.

This sequence belongs to the PP1 inhibitor family.

The protein localises to the cytoplasm. In terms of biological role, inhibitor of PPP1CA. Has over 1000-fold higher inhibitory activity when phosphorylated, creating a molecular switch for regulating the phosphorylation status of PPP1CA substrates and smooth muscle contraction. The protein is Protein phosphatase 1 regulatory subunit 14A (Ppp1r14a) of Rattus norvegicus (Rat).